We begin with the raw amino-acid sequence, 495 residues long: MGGIDQDNFSNISWQSDRLGAGSSAAHQHGGQESEQPTHNQAEPEPNYTSMIVHGMGLGDEVLECNVSSPLKENDGTKDAFVSYLVTTHTTFADFQKPDASVRRRFTDFVFLFKTLSREYPASAVPPLPDKQRMEYVRGDRFGNDFTSRRAYSLRRFLARCALHPVLRRSAILHTFLESPDWNATMRSRASRSVSMSGTSSGESGNAHYGGGSAGGGSTGGGNSLANSVFDNFADTFINAFTKVHKPDRRFIEVREKSDKLDEDLAHVEKVVARVSRRETDMEADHKDLAEQFQKLIVLEPGVEGPVRAFAASVEDTAQGLRGLREATEQDYLGSLRDLAAYSGALKNLLKAREQKQLDFEQLTEYLNKSSAERDVLASGGYSSGGALAGAGGFIRSKIEDVRGVDHEQSRRERLRKLELRIEELTVEVERAKKTSELFDEEVIREVSDFERIKRIELKRQFGSLAQSHTDFYDATIDVWEKYVKEMEKEGAVAA.

A compositionally biased stretch (low complexity) spans Gly-20–Gly-31. The tract at residues Gly-20–Met-51 is disordered. The 123-residue stretch at Val-62 to Ala-184 folds into the PX domain. Residues Arg-105, Thr-107, Lys-131, and Arg-150 each coordinate a 1,2-diacyl-sn-glycero-3-phospho-(1D-myo-inositol-3-phosphate). Over residues Ser-193–Ala-207 the composition is skewed to low complexity. The disordered stretch occupies residues Ser-193 to Thr-219. The span at His-208–Thr-219 shows a compositional bias: gly residues. Residues Asp-406 to Val-443 are a coiled coil.

The protein belongs to the sorting nexin family.

Its subcellular location is the cytoplasm. It localises to the cytosol. The protein localises to the preautophagosomal structure membrane. It is found in the endosome membrane. The protein resides in the mitochondrion membrane. Its subcellular location is the lipid droplet. In terms of biological role, sorting nexin, involved in the separation or division of vacuoles throughout the entire life cycle of the cells. Involved in retrieval of late-Golgi SNAREs from post-Golgi endosomes to the trans-Golgi network, for cytoplasm to vacuole transport (Cvt), and autophagy of large cargos including mitophagy, pexophagy and glycophagy. Required for invasion of the rice sheath. This chain is Sorting nexin-4 (SNX4), found in Pyricularia oryzae (strain 70-15 / ATCC MYA-4617 / FGSC 8958) (Rice blast fungus).